The following is a 715-amino-acid chain: MFDIKRKTIEWGGKTLTLETGRMARQADGAVLATYGETMVLATAVFAKSPKPGQDFFPLTVNYQEKFYAAGKIPGSFPRREGAPSQKETLTSRLIDRPIRPLFVKGFKNEVQVICTVLAHDLENDPDIVAMVAASAALVLSGVPFMGPIAAARVGYVNGEYVLNPTLDEMKESAMDLVVAGTAEAVMMVESEIKELTEEQVLGGVTFAHKGMQPVIDAIIELAEHSAKEPFDFQPDDTDEIAAKVKDLIGGDLRAAYQITGKSERHAAIGAAKEKAMTAFAKSEANPEGYDANKLGGVFKEIEADIVRRSILETGKRIDGRTVDQVRPILGEVGVLPRAHGSALFTRGETQALCVTTLGTGDDEQLIDALEGKYFEKFMLHYNFPPFSVGETGRMGSPGRREVGHGKLAWRALRPMLPSYEEFPYTIRIVSEIFESNGSSSMATVCGSSLALMDAGVPLKKPVSGIAMGLILEKDGFAVLSDILGDEDHLGDMDFKVAGTADGITSLQMDIKIAGITEEIMKKALEQAKGGRDHILAEMNKAMTAPRAELGEFAPKIETIKIPVDKIREVIGSGGKVIREIVEKTGAKIDIGEDGTIKIAAAEQTKIDAAKEWIKSIASEPEVGQIYTGKVVKIVDFGAFVNFFGAKDGLVHVSQISNERVAKVSDVLTEGQQVKVKLLGFDDRGKTRLSMKVVDQETGEDLSKSNEKAEEPADA.

Mg(2+) is bound by residues Asp488 and Asp494. Residues 555–614 (PKIETIKIPVDKIREVIGSGGKVIREIVEKTGAKIDIGEDGTIKIAAAEQTKIDAAKEWI) enclose the KH domain. The region spanning 624-692 (GQIYTGKVVK…DRGKTRLSMK (69 aa)) is the S1 motif domain. Residues 692-715 (KVVDQETGEDLSKSNEKAEEPADA) are disordered. Residues 701–715 (DLSKSNEKAEEPADA) show a composition bias toward basic and acidic residues.

Belongs to the polyribonucleotide nucleotidyltransferase family. Requires Mg(2+) as cofactor.

The protein resides in the cytoplasm. The enzyme catalyses RNA(n+1) + phosphate = RNA(n) + a ribonucleoside 5'-diphosphate. Functionally, involved in mRNA degradation. Catalyzes the phosphorolysis of single-stranded polyribonucleotides processively in the 3'- to 5'-direction. This chain is Polyribonucleotide nucleotidyltransferase, found in Phenylobacterium zucineum (strain HLK1).